The sequence spans 86 residues: Large ribosomal subunit protein bL27 (86 aa).

A disordered region spans residues M1 to Y26.

It belongs to the bacterial ribosomal protein bL27 family.

This is Large ribosomal subunit protein bL27 from Marinobacter nauticus (strain ATCC 700491 / DSM 11845 / VT8) (Marinobacter aquaeolei).